A 479-amino-acid chain; its full sequence is Cardiolipin synthase A (479 aa).

The next 2 membrane-spanning stretches (helical) occupy residues 8–28 (FFGYLLGMIHLLGIVAALHAL) and 38–58 (IAWAMPLLFIPYLTLIPYLIF). PLD phosphodiesterase domains lie at 218 to 245 (VNFRNHRKIVVVDGLLGFIGGHNVGDEY) and 392 to 419 (QPGFLHQKVVLVDDDVSAIGSANLDNRS). Active-site residues include H223, K225, D230, H397, K399, and D404.

Belongs to the phospholipase D family. Cardiolipin synthase subfamily. ClsA sub-subfamily.

The protein localises to the cell inner membrane. The catalysed reaction is 2 a 1,2-diacyl-sn-glycero-3-phospho-(1'-sn-glycerol) = a cardiolipin + glycerol. Catalyzes the reversible phosphatidyl group transfer from one phosphatidylglycerol molecule to another to form cardiolipin (CL) (diphosphatidylglycerol) and glycerol. The polypeptide is Cardiolipin synthase A (Pseudomonas putida (strain ATCC 700007 / DSM 6899 / JCM 31910 / BCRC 17059 / LMG 24140 / F1)).